The sequence spans 337 residues: Phenylalanine--tRNA ligase alpha subunit (337 aa).

Glu258 is a Mg(2+) binding site.

Belongs to the class-II aminoacyl-tRNA synthetase family. Phe-tRNA synthetase alpha subunit type 1 subfamily. As to quaternary structure, tetramer of two alpha and two beta subunits. Requires Mg(2+) as cofactor.

The protein resides in the cytoplasm. It carries out the reaction tRNA(Phe) + L-phenylalanine + ATP = L-phenylalanyl-tRNA(Phe) + AMP + diphosphate + H(+). This chain is Phenylalanine--tRNA ligase alpha subunit, found in Burkholderia cenocepacia (strain ATCC BAA-245 / DSM 16553 / LMG 16656 / NCTC 13227 / J2315 / CF5610) (Burkholderia cepacia (strain J2315)).